The chain runs to 167 residues: 2-C-methyl-D-erythritol 2,4-cyclodiphosphate synthase (167 aa).

Residues Asp8 and His10 each coordinate a divalent metal cation. 4-CDP-2-C-methyl-D-erythritol 2-phosphate contacts are provided by residues 8–10 (DIH) and 34–35 (HS). A divalent metal cation is bound at residue His42. 4-CDP-2-C-methyl-D-erythritol 2-phosphate-binding positions include 56–58 (DIG) and Arg142.

It belongs to the IspF family. As to quaternary structure, homotrimer. Requires a divalent metal cation as cofactor.

It carries out the reaction 4-CDP-2-C-methyl-D-erythritol 2-phosphate = 2-C-methyl-D-erythritol 2,4-cyclic diphosphate + CMP. It participates in isoprenoid biosynthesis; isopentenyl diphosphate biosynthesis via DXP pathway; isopentenyl diphosphate from 1-deoxy-D-xylulose 5-phosphate: step 4/6. Its function is as follows. Involved in the biosynthesis of isopentenyl diphosphate (IPP) and dimethylallyl diphosphate (DMAPP), two major building blocks of isoprenoid compounds. Catalyzes the conversion of 4-diphosphocytidyl-2-C-methyl-D-erythritol 2-phosphate (CDP-ME2P) to 2-C-methyl-D-erythritol 2,4-cyclodiphosphate (ME-CPP) with a corresponding release of cytidine 5-monophosphate (CMP). The protein is 2-C-methyl-D-erythritol 2,4-cyclodiphosphate synthase of Buchnera aphidicola subsp. Schizaphis graminum (strain Sg).